The chain runs to 312 residues: Ribosomal protein uL3 glutamine methyltransferase (312 aa).

The protein belongs to the protein N5-glutamine methyltransferase family. PrmB subfamily.

It carries out the reaction L-glutaminyl-[ribosomal protein uL3] + S-adenosyl-L-methionine = N(5)-methyl-L-glutaminyl-[ribosomal protein uL3] + S-adenosyl-L-homocysteine + H(+). Its function is as follows. Methylates large ribosomal subunit protein uL3 on a specific glutamine residue. This Xylella fastidiosa (strain 9a5c) protein is Ribosomal protein uL3 glutamine methyltransferase.